The primary structure comprises 463 residues: ATP-dependent protease ATPase subunit HslU (463 aa).

ATP is bound by residues isoleucine 19, 61 to 66 (GVGKTE), aspartate 277, glutamate 341, and arginine 413.

It belongs to the ClpX chaperone family. HslU subfamily. As to quaternary structure, a double ring-shaped homohexamer of HslV is capped on each side by a ring-shaped HslU homohexamer. The assembly of the HslU/HslV complex is dependent on binding of ATP.

Its subcellular location is the cytoplasm. ATPase subunit of a proteasome-like degradation complex; this subunit has chaperone activity. The binding of ATP and its subsequent hydrolysis by HslU are essential for unfolding of protein substrates subsequently hydrolyzed by HslV. HslU recognizes the N-terminal part of its protein substrates and unfolds these before they are guided to HslV for hydrolysis. The sequence is that of ATP-dependent protease ATPase subunit HslU from Bacillus cereus (strain 03BB102).